A 198-amino-acid chain; its full sequence is Protein GrpE (198 aa).

Belongs to the GrpE family. As to quaternary structure, homodimer.

Its subcellular location is the cytoplasm. Its function is as follows. Participates actively in the response to hyperosmotic and heat shock by preventing the aggregation of stress-denatured proteins, in association with DnaK and GrpE. It is the nucleotide exchange factor for DnaK and may function as a thermosensor. Unfolded proteins bind initially to DnaJ; upon interaction with the DnaJ-bound protein, DnaK hydrolyzes its bound ATP, resulting in the formation of a stable complex. GrpE releases ADP from DnaK; ATP binding to DnaK triggers the release of the substrate protein, thus completing the reaction cycle. Several rounds of ATP-dependent interactions between DnaJ, DnaK and GrpE are required for fully efficient folding. This is Protein GrpE from Baumannia cicadellinicola subsp. Homalodisca coagulata.